We begin with the raw amino-acid sequence, 130 residues long: Small ribosomal subunit protein uS8 (130 aa).

Belongs to the universal ribosomal protein uS8 family. Part of the 30S ribosomal subunit. Contacts proteins S5 and S12.

Functionally, one of the primary rRNA binding proteins, it binds directly to 16S rRNA central domain where it helps coordinate assembly of the platform of the 30S subunit. In Pseudomonas fluorescens (strain Pf0-1), this protein is Small ribosomal subunit protein uS8.